The sequence spans 888 residues: Kinesin-like protein KIF20A (888 aa).

Ser2 is modified (N-acetylserine). Phosphoserine is present on residues Ser7, Ser14, and Ser21. The region spanning 63-506 (KVKVYLRVRP…AKFSAIASQL (444 aa)) is the Kinesin motor domain. 159–166 (GVTNSGKT) lines the ATP pocket. Ser527 bears the Phosphoserine; by PLK1 mark. Ser531 carries the phosphoserine modification. Coiled coils occupy residues 559 to 587 (KEELLQVVEAMKALLLKERQEKLRLEVQL) and 630 to 760 (ESLT…ERAC). Ser667, Ser683, and Ser823 each carry phosphoserine. The interval 761 to 888 (CHNTGAGKLR…LKSGPFGKKY (128 aa)) is globular. Residues 823-863 (STKKRLGANQENQQPNQQPPGKKPFLRNLLPRTPTCQSSTD) are disordered. Thr855 carries the phosphothreonine modification. Residues Ser865, Ser876, and Ser881 each carry the phosphoserine modification.

It belongs to the TRAFAC class myosin-kinesin ATPase superfamily. Kinesin family. In terms of processing, phosphorylated by PLK1 at Ser-527 during mitosis, creating a docking site for PLK1 and recruiting PLK1 at central spindle.

The protein localises to the golgi apparatus. The protein resides in the cytoplasm. Its subcellular location is the cytoskeleton. It is found in the spindle. In terms of biological role, mitotic kinesin required for chromosome passenger complex (CPC)-mediated cytokinesis. Following phosphorylation by PLK1, involved in recruitment of PLK1 to the central spindle. Interacts with guanosine triphosphate (GTP)-bound forms of RAB6A and RAB6B. May act as a motor required for the retrograde RAB6 regulated transport of Golgi membranes and associated vesicles along microtubules. Has a microtubule plus end-directed motility. The polypeptide is Kinesin-like protein KIF20A (KIF20A) (Bos taurus (Bovine)).